Reading from the N-terminus, the 532-residue chain is uncharacterized protein (532 aa).

A run of 14 helical transmembrane segments spans residues 25–45 (ITKI…GDVG), 65–85 (SGFP…NHHT), 109–129 (AVPI…QVAA), 134–154 (LFPF…MLPS), 179–199 (KGAS…AGSL), 203–223 (IILG…RQNE), 248–268 (LLLF…SGGE), 302–322 (VPYI…EKIT), 344–364 (KPVN…QVFS), 371–391 (SLAV…FPAI), 392–412 (AVGA…PRYG), 425–445 (AAVA…DKLR), 459–479 (SAVL…TGRG), and 494–514 (AVFI…LNSV).

This sequence belongs to the polysaccharide synthase family.

Its subcellular location is the cell membrane. This is an uncharacterized protein from Bacillus subtilis (strain 168).